A 256-amino-acid polypeptide reads, in one-letter code: Ribosomal RNA small subunit methyltransferase J (256 aa).

Residues 101 to 102 (RD), 117 to 118 (ER), and Asp-174 contribute to the S-adenosyl-L-methionine site.

The protein belongs to the methyltransferase superfamily. RsmJ family.

Its subcellular location is the cytoplasm. The enzyme catalyses guanosine(1516) in 16S rRNA + S-adenosyl-L-methionine = N(2)-methylguanosine(1516) in 16S rRNA + S-adenosyl-L-homocysteine + H(+). Functionally, specifically methylates the guanosine in position 1516 of 16S rRNA. In Chromohalobacter salexigens (strain ATCC BAA-138 / DSM 3043 / CIP 106854 / NCIMB 13768 / 1H11), this protein is Ribosomal RNA small subunit methyltransferase J.